The sequence spans 270 residues: MSTGQEARRDEGDSRKEQEASLRDRAHLSQQRQLKQATQFLHKDSADLLPLDSLKRLGTSKDLQPHSVIQRRLVEGNQRRLQGESPLLQALIRGHDSSRTSATQVPALLVNCKCQDQMLRVAVDTGTQHNQISAGCLRRLGLGKRVPKAPGGDVAPEPPTQVEQLELELGQETVACSAQVVDVDSPEFCLGLQTLLSLKLATSLSASSLLPSALGIPTESICDSEALVPHSLLSLPKCTTKSLTEKDLQQMGSRLHPGCRGQSYLLPPLA.

Residues 1-27 (MSTGQEARRDEGDSRKEQEASLRDRAH) are compositionally biased toward basic and acidic residues. The segment at 1-33 (MSTGQEARRDEGDSRKEQEASLRDRAHLSQQRQ) is disordered. Residues 61–99 (KDLQPHSVIQRRLVEGNQRRLQGESPLLQALIRGHDSSR) are interaction with NR1F2. Residues 192 to 196 (LQTLL) carry the LXXLL motif motif.

Interacts with NR1F2, RARA and THRB in a ligand-dependent manner. In terms of tissue distribution, expression is restricted to the central nervous system (neurons in the dentate gyrus of the hippocampus, the amygdala, thalamic and hypothalamic regions).

The protein localises to the nucleus. Its function is as follows. Down-regulates transcriptional activation by nuclear receptors, such as NR1F2. In Mus musculus (Mouse), this protein is Nuclear receptor-interacting protein 2 (Nrip2).